We begin with the raw amino-acid sequence, 622 residues long: Chaperone protein HscA homolog (622 aa).

It belongs to the heat shock protein 70 family.

Its function is as follows. Chaperone involved in the maturation of iron-sulfur cluster-containing proteins. Has a low intrinsic ATPase activity which is markedly stimulated by HscB. The polypeptide is Chaperone protein HscA homolog (Methylobacillus flagellatus (strain ATCC 51484 / DSM 6875 / VKM B-1610 / KT)).